A 351-amino-acid polypeptide reads, in one-letter code: Photosystem II D2 protein (351 aa).

A helical transmembrane segment spans residues 39–59 (CAYLALGAWFTGTTFVSSWYT). Residue histidine 116 coordinates chlorophyll a. A helical membrane pass occupies residues 123-139 (GFCLRQFEIARLVGLRP). Residues glutamine 128 and asparagine 141 each contribute to the pheophytin a site. Residues 151–164 (VFVSVFLLYPLGQA) form a helical membrane-spanning segment. Histidine 196 serves as a coordination point for chlorophyll a. A helical transmembrane segment spans residues 206–226 (GALLCAIHGATVENTLFEDGE). The a plastoquinone site is built by histidine 213 and phenylalanine 260. Residue histidine 213 participates in Fe cation binding. Residue histidine 267 coordinates Fe cation. Residues 277–293 (GLWVSSIGIVGLALNLR) form a helical membrane-spanning segment.

The protein belongs to the reaction center PufL/M/PsbA/D family. In terms of assembly, PSII is composed of 1 copy each of membrane proteins PsbA, PsbB, PsbC, PsbD, PsbE, PsbF, PsbH, PsbI, PsbJ, PsbK, PsbL, PsbM, PsbT, PsbY, PsbZ, Psb30/Ycf12, at least 3 peripheral proteins of the oxygen-evolving complex and a large number of cofactors. It forms dimeric complexes. The D1/D2 heterodimer binds P680, chlorophylls that are the primary electron donor of PSII, and subsequent electron acceptors. It shares a non-heme iron and each subunit binds pheophytin, quinone, additional chlorophylls, carotenoids and lipids. There is also a Cl(-1) ion associated with D1 and D2, which is required for oxygen evolution. The PSII complex binds additional chlorophylls, carotenoids and specific lipids. serves as cofactor.

The protein localises to the plastid. It is found in the chloroplast thylakoid membrane. The enzyme catalyses 2 a plastoquinone + 4 hnu + 2 H2O = 2 a plastoquinol + O2. Photosystem II (PSII) is a light-driven water:plastoquinone oxidoreductase that uses light energy to abstract electrons from H(2)O, generating O(2) and a proton gradient subsequently used for ATP formation. It consists of a core antenna complex that captures photons, and an electron transfer chain that converts photonic excitation into a charge separation. The D1/D2 (PsbA/PsbD) reaction center heterodimer binds P680, the primary electron donor of PSII as well as several subsequent electron acceptors. D2 is needed for assembly of a stable PSII complex. The chain is Photosystem II D2 protein from Cyanidium caldarium (Red alga).